Here is a 318-residue protein sequence, read N- to C-terminus: Ubiquitin-like domain-containing CTD phosphatase 1 (318 aa).

Ala-2 carries the N-acetylalanine modification. A Ubiquitin-like domain is found at 3 to 81 (LPIIVKWGGQ…IMMMGTREES (79 aa)). At Lys-117 the chain carries N6-acetyllysine. The FCP1 homology domain occupies 133 to 294 (PREGKKLLVL…LKLTQYLKEI (162 aa)). Asp-143, Asp-145, and Asp-253 together coordinate Mg(2+).

The cofactor is Mg(2+).

The protein localises to the nucleus. The enzyme catalyses O-phospho-L-seryl-[protein] + H2O = L-seryl-[protein] + phosphate. It catalyses the reaction O-phospho-L-threonyl-[protein] + H2O = L-threonyl-[protein] + phosphate. In terms of biological role, dephosphorylates 26S nuclear proteasomes, thereby decreasing their proteolytic activity. Recruited to the 19S regulatory particle of the 26S proteasome through its interaction with 19S component PSMD2/RPN1. Once recruited, dephosphorylates 19S component PSMC2/RPT1 which impairs PSMC2 ATPase activity and disrupts 26S proteasome assembly. Has also been reported to stimulate the proteolytic activity of the 26S proteasome. This is Ubiquitin-like domain-containing CTD phosphatase 1 (UBLCP1) from Pongo abelii (Sumatran orangutan).